Here is a 166-residue protein sequence, read N- to C-terminus: NAD(P)H-quinone oxidoreductase subunit I, chloroplastic (166 aa).

2 consecutive 4Fe-4S ferredoxin-type domains span residues glycine 55 to lysine 84 and leucine 95 to glutamate 124. Residues cysteine 64, cysteine 67, cysteine 70, cysteine 74, cysteine 104, cysteine 107, cysteine 110, and cysteine 114 each coordinate [4Fe-4S] cluster.

The protein belongs to the complex I 23 kDa subunit family. In terms of assembly, NDH is composed of at least 16 different subunits, 5 of which are encoded in the nucleus. The cofactor is [4Fe-4S] cluster.

The protein resides in the plastid. The protein localises to the chloroplast thylakoid membrane. It catalyses the reaction a plastoquinone + NADH + (n+1) H(+)(in) = a plastoquinol + NAD(+) + n H(+)(out). It carries out the reaction a plastoquinone + NADPH + (n+1) H(+)(in) = a plastoquinol + NADP(+) + n H(+)(out). NDH shuttles electrons from NAD(P)H:plastoquinone, via FMN and iron-sulfur (Fe-S) centers, to quinones in the photosynthetic chain and possibly in a chloroplast respiratory chain. The immediate electron acceptor for the enzyme in this species is believed to be plastoquinone. Couples the redox reaction to proton translocation, and thus conserves the redox energy in a proton gradient. The sequence is that of NAD(P)H-quinone oxidoreductase subunit I, chloroplastic from Parthenium hysterophorus (Santa Maria feverfew).